A 334-amino-acid chain; its full sequence is Ribosomal RNA small subunit methyltransferase H (334 aa).

Residues 1-21 are disordered; sequence MNALPIRTAAPSGHSGGHSST. S-adenosyl-L-methionine contacts are provided by residues 52–54, Asp71, Phe98, Asp119, and Gln126; that span reads GGY.

It belongs to the methyltransferase superfamily. RsmH family.

It is found in the cytoplasm. It catalyses the reaction cytidine(1402) in 16S rRNA + S-adenosyl-L-methionine = N(4)-methylcytidine(1402) in 16S rRNA + S-adenosyl-L-homocysteine + H(+). Specifically methylates the N4 position of cytidine in position 1402 (C1402) of 16S rRNA. This chain is Ribosomal RNA small subunit methyltransferase H, found in Granulibacter bethesdensis (strain ATCC BAA-1260 / CGDNIH1).